The sequence spans 433 residues: Metacaspase-1 (433 aa).

Residues 1–123 (MYPGRAKPTY…PPSQVQHTGP (123 aa)) form a disordered region. Over residues 9 to 44 (TYNNQQAQQAQSQVGYQTGYSNAQPQQQYYTAPQQQ) the composition is skewed to low complexity. Polar residues-rich tracts occupy residues 45 to 55 (NVSGSSMSFQH) and 83 to 109 (QQNYRNDIQQNHASGTVNGPSGYQQPQ). Active-site residues include His-222 and Cys-278.

It belongs to the peptidase C14B family.

Its function is as follows. Involved in cell death (apoptosis). In Kluyveromyces lactis (strain ATCC 8585 / CBS 2359 / DSM 70799 / NBRC 1267 / NRRL Y-1140 / WM37) (Yeast), this protein is Metacaspase-1 (MCA1).